The primary structure comprises 182 residues: Orotate phosphoribosyltransferase (182 aa).

5-phospho-alpha-D-ribose 1-diphosphate-binding positions include Arg96, Lys97, Lys100, His102, and 122-130; that span reads EDTSTTGGS. Residues Thr126 and Arg154 each coordinate orotate.

This sequence belongs to the purine/pyrimidine phosphoribosyltransferase family. PyrE subfamily. In terms of assembly, homodimer. It depends on Mg(2+) as a cofactor.

It carries out the reaction orotidine 5'-phosphate + diphosphate = orotate + 5-phospho-alpha-D-ribose 1-diphosphate. It functions in the pathway pyrimidine metabolism; UMP biosynthesis via de novo pathway; UMP from orotate: step 1/2. Its function is as follows. Catalyzes the transfer of a ribosyl phosphate group from 5-phosphoribose 1-diphosphate to orotate, leading to the formation of orotidine monophosphate (OMP). This is Orotate phosphoribosyltransferase from Streptomyces coelicolor (strain ATCC BAA-471 / A3(2) / M145).